The following is a 314-amino-acid chain: Homoserine kinase (314 aa).

Position 96 to 106 (96 to 106 (PIGSGLGSSAC)) interacts with ATP.

Belongs to the GHMP kinase family. Homoserine kinase subfamily.

The protein resides in the cytoplasm. The enzyme catalyses L-homoserine + ATP = O-phospho-L-homoserine + ADP + H(+). It participates in amino-acid biosynthesis; L-threonine biosynthesis; L-threonine from L-aspartate: step 4/5. In terms of biological role, catalyzes the ATP-dependent phosphorylation of L-homoserine to L-homoserine phosphate. This Haemophilus influenzae (strain PittEE) protein is Homoserine kinase.